A 96-amino-acid chain; its full sequence is Small ribosomal subunit protein bS6 (96 aa).

This sequence belongs to the bacterial ribosomal protein bS6 family.

Its function is as follows. Binds together with bS18 to 16S ribosomal RNA. In Bacillus cereus (strain G9842), this protein is Small ribosomal subunit protein bS6.